The sequence spans 178 residues: ATP synthase subunit delta (178 aa).

The protein belongs to the ATPase delta chain family. As to quaternary structure, F-type ATPases have 2 components, F(1) - the catalytic core - and F(0) - the membrane proton channel. F(1) has five subunits: alpha(3), beta(3), gamma(1), delta(1), epsilon(1). F(0) has three main subunits: a(1), b(2) and c(10-14). The alpha and beta chains form an alternating ring which encloses part of the gamma chain. F(1) is attached to F(0) by a central stalk formed by the gamma and epsilon chains, while a peripheral stalk is formed by the delta and b chains.

It is found in the cell inner membrane. F(1)F(0) ATP synthase produces ATP from ADP in the presence of a proton or sodium gradient. F-type ATPases consist of two structural domains, F(1) containing the extramembraneous catalytic core and F(0) containing the membrane proton channel, linked together by a central stalk and a peripheral stalk. During catalysis, ATP synthesis in the catalytic domain of F(1) is coupled via a rotary mechanism of the central stalk subunits to proton translocation. In terms of biological role, this protein is part of the stalk that links CF(0) to CF(1). It either transmits conformational changes from CF(0) to CF(1) or is implicated in proton conduction. This chain is ATP synthase subunit delta, found in Chromobacterium violaceum (strain ATCC 12472 / DSM 30191 / JCM 1249 / CCUG 213 / NBRC 12614 / NCIMB 9131 / NCTC 9757 / MK).